Reading from the N-terminus, the 660-residue chain is ATP-dependent RNA helicase DDX18 (660 aa).

The segment at 16-153 (RNAKLRQRNL…DVKKADDSEV (138 aa)) is disordered. Over residues 25–40 (LKLQETSDTSLSQPQN) the composition is skewed to polar residues. A compositionally biased stretch (basic and acidic residues) spans 124-133 (PDTKKAKTEE). Residues 134–143 (SAEACEEPED) are compositionally biased toward acidic residues. A Q motif motif is present at residues 169 to 197 (FASLSNLVNENTLKAIEEMGFKRMTEIQH). In terms of domain architecture, Helicase ATP-binding spans 200-375 (IRPLLEGRDL…RISLKKEPLY (176 aa)). 213–220 (AKTGSGKT) is an ATP binding site. The DEAD box signature appears at 323–326 (DEAD). In terms of domain architecture, Helicase C-terminal spans 389 to 559 (GLEQGYVVCP…DIQSQLEKLI (171 aa)).

Belongs to the DEAD box helicase family. DDX18/HAS1 subfamily. As to quaternary structure, interacts with NOL8; the interaction is RNA-dependent. Interacts with PRC2 complex components EZH2, SUZ2 and JARID2; these interactions prevent deposition of the repressive H3K27me3 mark onto rDNA in pluripotent cells.

It is found in the nucleus. The protein localises to the nucleolus. It localises to the chromosome. It carries out the reaction ATP + H2O = ADP + phosphate + H(+). ATP-dependent RNA helicase that plays a role in the regulation of R-loop homeostasis in both endogenous R-loop-prone regions and at sites of DNA damage. At endogenous loci such as actively transcribed genes, may act as a helicase to resolve the formation of R-loop during transcription and prevent the interference of R-loop with DNA-replication machinery. Also participates in the removal of DNA-lesion-associated R-loop. Plays an essential role for establishing pluripotency during embryogenesis and for pluripotency maintenance in embryonic stem cells. Mechanistically, prevents the polycomb repressive complex 2 (PRC2) from accessing rDNA loci and protects the active chromatin status in nucleolus. The protein is ATP-dependent RNA helicase DDX18 (Ddx18) of Mus musculus (Mouse).